Consider the following 122-residue polypeptide: Large ribosomal subunit protein uL14 (122 aa).

This sequence belongs to the universal ribosomal protein uL14 family. In terms of assembly, part of the 50S ribosomal subunit. Forms a cluster with proteins L3 and L19. In the 70S ribosome, L14 and L19 interact and together make contacts with the 16S rRNA in bridges B5 and B8.

Its function is as follows. Binds to 23S rRNA. Forms part of two intersubunit bridges in the 70S ribosome. This chain is Large ribosomal subunit protein uL14, found in Thiobacillus denitrificans (strain ATCC 25259 / T1).